Reading from the N-terminus, the 341-residue chain is GTP 3',8-cyclase (341 aa).

Residues 11 to 231 (QKSRPLRDLR…RIINEDMPIE (221 aa)) form the Radical SAM core domain. Arg20 serves as a coordination point for GTP. Cys27 and Cys31 together coordinate [4Fe-4S] cluster. Residue Tyr33 coordinates S-adenosyl-L-methionine. Cys34 contributes to the [4Fe-4S] cluster binding site. Residue Arg75 coordinates GTP. Position 79 (Gly79) interacts with S-adenosyl-L-methionine. Thr106 contacts GTP. An S-adenosyl-L-methionine-binding site is contributed by Ser130. Lys167 serves as a coordination point for GTP. Residue Met201 participates in S-adenosyl-L-methionine binding. The [4Fe-4S] cluster site is built by Cys265 and Cys268. 270–272 (RAR) provides a ligand contact to GTP. Cys282 lines the [4Fe-4S] cluster pocket.

The protein belongs to the radical SAM superfamily. MoaA family. In terms of assembly, monomer and homodimer. It depends on [4Fe-4S] cluster as a cofactor.

The enzyme catalyses GTP + AH2 + S-adenosyl-L-methionine = (8S)-3',8-cyclo-7,8-dihydroguanosine 5'-triphosphate + 5'-deoxyadenosine + L-methionine + A + H(+). It participates in cofactor biosynthesis; molybdopterin biosynthesis. Functionally, catalyzes the cyclization of GTP to (8S)-3',8-cyclo-7,8-dihydroguanosine 5'-triphosphate. The chain is GTP 3',8-cyclase from Bacillus licheniformis (strain ATCC 14580 / DSM 13 / JCM 2505 / CCUG 7422 / NBRC 12200 / NCIMB 9375 / NCTC 10341 / NRRL NRS-1264 / Gibson 46).